Consider the following 61-residue polypeptide: Small ribosomal subunit protein uS14 (61 aa).

Residues Cys-24, Cys-27, Cys-40, and Cys-43 each coordinate Zn(2+).

The protein belongs to the universal ribosomal protein uS14 family. Zinc-binding uS14 subfamily. As to quaternary structure, part of the 30S ribosomal subunit. Contacts proteins S3 and S10. Requires Zn(2+) as cofactor.

Functionally, binds 16S rRNA, required for the assembly of 30S particles and may also be responsible for determining the conformation of the 16S rRNA at the A site. The sequence is that of Small ribosomal subunit protein uS14 from Leptospira biflexa serovar Patoc (strain Patoc 1 / Ames).